The sequence spans 157 residues: Arginine repressor (157 aa).

This sequence belongs to the ArgR family.

It is found in the cytoplasm. The protein operates within amino-acid biosynthesis; L-arginine biosynthesis [regulation]. Functionally, regulates arginine biosynthesis genes. The polypeptide is Arginine repressor (Deinococcus deserti (strain DSM 17065 / CIP 109153 / LMG 22923 / VCD115)).